The sequence spans 391 residues: Nutrient and stress factor 1 (391 aa).

Positions 1-27 (MENTTNRNTAGVLTSSNGNFATNSVAA) are enriched in polar residues. The disordered stretch occupies residues 1-37 (MENTTNRNTAGVLTSSNGNFATNSVAASTPKRSKSAR). 2 consecutive C2H2-type zinc fingers follow at residues 41-66 (FKCT…IRKH) and 72-95 (FQCP…ESVH). A disordered region spans residues 91–149 (RESVHAHKNHHSTSSHQRKPSSSSLSSSSSASSSSSASSSTSYSDPYRKTNINSGNMPM). Basic residues predominate over residues 96–109 (AHKNHHSTSSHQRK). Low complexity predominate over residues 110 to 134 (PSSSSLSSSSSASSSSSASSSTSYS). Residues serine 162 and serine 163 each carry the phosphoserine modification. Residues 326-374 (AFSQPPNGNKNNNMSSSKNGGKGGENFKNTDDRNDNNNKKRSETLSESD) form a disordered region. Residues 332-344 (NGNKNNNMSSSKN) are compositionally biased toward low complexity. Over residues 353–369 (KNTDDRNDNNNKKRSET) the composition is skewed to basic and acidic residues.

Its subcellular location is the nucleus. Transcription factor that participates in the transcriptional activation of glucose-repressed genes during exponential growth in non-fermentable carbon conditions. Also involved in salt-stress response. This Saccharomyces cerevisiae (strain ATCC 204508 / S288c) (Baker's yeast) protein is Nutrient and stress factor 1 (USV1).